Consider the following 34-residue polypeptide: Photosystem II reaction center protein M (34 aa).

The chain crosses the membrane as a helical span at residues 5 to 25; the sequence is ILGLMAVALFILIPTSFLLIL.

This sequence belongs to the PsbM family. PSII is composed of 1 copy each of membrane proteins PsbA, PsbB, PsbC, PsbD, PsbE, PsbF, PsbH, PsbI, PsbJ, PsbK, PsbL, PsbM, PsbT, PsbX, PsbY, PsbZ, Psb30/Ycf12, at least 3 peripheral proteins of the oxygen-evolving complex and a large number of cofactors. It forms dimeric complexes.

It is found in the plastid. It localises to the chloroplast thylakoid membrane. One of the components of the core complex of photosystem II (PSII). PSII is a light-driven water:plastoquinone oxidoreductase that uses light energy to abstract electrons from H(2)O, generating O(2) and a proton gradient subsequently used for ATP formation. It consists of a core antenna complex that captures photons, and an electron transfer chain that converts photonic excitation into a charge separation. This subunit is found at the monomer-monomer interface. The protein is Photosystem II reaction center protein M of Tupiella akineta (Green alga).